The following is a 303-amino-acid chain: 2-phospho-L-lactate transferase (303 aa).

Residues Asp48 and Lys87 each coordinate 7,8-didemethyl-8-hydroxy-5-deazariboflavin.

The protein belongs to the CofD family. In terms of assembly, homodimer. Requires Mg(2+) as cofactor.

It carries out the reaction (2S)-lactyl-2-diphospho-5'-guanosine + 7,8-didemethyl-8-hydroxy-5-deazariboflavin = oxidized coenzyme F420-0 + GMP + H(+). Its pathway is cofactor biosynthesis; coenzyme F420 biosynthesis. Its function is as follows. Catalyzes the transfer of the 2-phospholactate moiety from (2S)-lactyl-2-diphospho-5'-guanosine to 7,8-didemethyl-8-hydroxy-5-deazariboflavin (FO) with the formation of oxidized coenzyme F420-0 and GMP. The chain is 2-phospho-L-lactate transferase from Methanosarcina mazei (strain ATCC BAA-159 / DSM 3647 / Goe1 / Go1 / JCM 11833 / OCM 88) (Methanosarcina frisia).